The chain runs to 938 residues: MSTMHLLTFALLFSCSFARAACDPKIVNIGAVLSTRKHEQMFREAVNQANKRHGSWKIQLNATSVTHKPNAIQMALSVCEDLISSQVYAILVSHPPTPNDHFTPTPVSYTAGFYRIPVLGLTTRMSIYSDKSIHLSFLRTVPPYSHQSSVWFEMMRVYNWNHIILLVSDDHEGRAAQKRLETLLEERESKAEKVLQFDPGTKNVTALLMEARELEARVIILSASEDDAATVYRAAAMLNMTGSGYVWLVGEREISGNALRYAPDGIIGLQLINGKNESAHISDAVGVVAQAVHELLEKENITDPPRGCVGNTNIWKTGPLFKRVLMSSKYADGVTGRVEFNEDGDRKFANYSIMNLQNRKLVQVGIYNGTHVIPNDRKIIWPGGETEKPRGYQMSTRLKIVTIHQEPFVYVKPTMSDGTCKEEFTVNGDPVKKVICTGPNDTSPGSPRHTVPQCCYGFCIDLLIKLARTMNFTYEVHLVADGKFGTQERVNNSNKKEWNGMMGELLSGQADMIVAPLTINNERAQYIEFSKPFKYQGLTILVKKEIPRSTLDSFMQPFQSTLWLLVGLSVHVVAVMLYLLDRFSPFGRFKVNSEEEEEDALTLSSAMWFSWGVLLNSGIGEGAPRSFSARILGMVWAGFAMIIVASYTANLAAFLVLDRPEERITGINDPRLRNPSDKFIYATVKQSSVDIYFRRQVELSTMYRHMEKHNYESAAEAIQAVRDNKLHAFIWDSAVLEFEASQKCDLVTTGELFFRSGFGIGMRKDSPWKQNVSLSILKSHENGFMEDLDKTWVRYQECDSRSNAPATLTFENMAGVFMLVAGGIVAGIFLIFIEIAYKRHKDARRKQMQLAFAAVNVWRKNLQDRKSGRAEPDPKKKATFRAITSTLASSFKRRRSSKDTSTGGGRGALQNQKDTVLPRRAIEREEGQLQLCSRHRES.

The N-terminal stretch at 1 to 18 (MSTMHLLTFALLFSCSFA) is a signal peptide. Over 19–559 (RAACDPKIVN…TLDSFMQPFQ (541 aa)) the chain is Extracellular. N-linked (GlcNAc...) asparagine glycosylation is found at N61, N203, N239, N276, N300, N350, N368, N440, N471, and N491. C79 and C308 are oxidised to a cystine. 2 cysteine pairs are disulfide-bonded: C420-C454 and C436-C455. 3 residues coordinate glycine: P516, T518, and R523. Residues 560-580 (STLWLLVGLSVHVVAVMLYLL) traverse the membrane as a helical segment. At 581–602 (DRFSPFGRFKVNSEEEEEDALT) the chain is on the cytoplasmic side. An intramembrane region (discontinuously helical) is located at residues 603–624 (LSSAMWFSWGVLLNSGIGEGAP). Positions 603 to 624 (LSSAMWFSWGVLLNSGIGEGAP) are pore-forming. Residues 625-630 (RSFSAR) are Cytoplasmic-facing. A helical transmembrane segment spans residues 631-647 (ILGMVWAGFAMIIVASY). Over 648–812 (TANLAAFLVL…NAPATLTFEN (165 aa)) the chain is Extracellular. A glycan (N-linked (GlcNAc...) asparagine) is linked at N674. S688 and D732 together coordinate glycine. The cysteines at positions 744 and 798 are disulfide-linked. Residue N771 is glycosylated (N-linked (GlcNAc...) asparagine). The helical transmembrane segment at 813–833 (MAGVFMLVAGGIVAGIFLIFI) threads the bilayer. Residues 834-938 (EIAYKRHKDA…LQLCSRHRES (105 aa)) are Cytoplasmic-facing. K877 is subject to Phosphoserine. S889, S890, S896, and S897 each carry phosphoserine; by PKC. The disordered stretch occupies residues 889–938 (SSFKRRRSSKDTSTGGGRGALQNQKDTVLPRRAIEREEGQLQLCSRHRES). K898 bears the Phosphoserine mark. A compositionally biased stretch (basic and acidic residues) spans 916–927 (VLPRRAIEREEG).

This sequence belongs to the glutamate-gated ion channel (TC 1.A.10.1) family. NR1/GRIN1 subfamily. As to quaternary structure, heterotetramer; the NMDAR subunits are modular and harbor tiered domains that function in concert to regulate opening and closing of the cation-selective ion channel pore. Forms heterotetrameric channels composed of two GluN1/zeta subunits (GRIN1), and two identical GluN2/epsilon subunits (GRIN2A, GRIN2B, GRIN2C or GRIN2D) or GluN3 subunits (GRIN3A or GRIN3B) (in vitro). Can also form heterotetrameric channels that contain at least two GluN1 subunits and at least two different GluN2 subunits (or a combination of one GluN2 and one GluN3 subunits) (in vitro). In vivo, the subunit composition may vary in function of the expression levels of the different subunits. Found in a complex with GRIN2A or GRIN2B, GRIN3A and PPP2CB. Found in a complex with GRIN2A or GRIN2B and GRIN3B;. Interacts with SNX27 (via PDZ domain); the interaction is required for recycling to the plasma membrane when endocytosed and prevent degradation in lysosomes. Interacts with DLG4 and MPDZ. Interacts with LRFN1 and LRFN2. Interacts with MYZAP. Found in a complex with DLG4 and PRR7. Found in a complex with GRIN2B and PRR7. Interacts with PRR7; the interaction is reduced following NMDA receptor activity. In terms of processing, NMDA is probably regulated by C-terminal phosphorylation of an isoform of NR1 by PKC. Dephosphorylated on Ser-897 probably by protein phosphatase 2A (PPP2CB). Its phosphorylated state is influenced by the formation of the NMDAR-PPP2CB complex and the NMDAR channel activity. In terms of tissue distribution, detected throughout the brain, in brain cortex, cerebellum, thalamus and olfactory bulb.

The protein localises to the cell membrane. Its subcellular location is the postsynaptic cell membrane. The protein resides in the synaptic cell membrane. It is found in the postsynaptic density membrane. The enzyme catalyses Ca(2+)(in) = Ca(2+)(out). It carries out the reaction Na(+)(in) = Na(+)(out). The catalysed reaction is K(+)(in) = K(+)(out). Its activity is regulated as follows. NMDA glutamate receptor activity is potentiated by Zn2(+) in a dose-dependent fashion. The potentiating effect of Zn2(+) is at submicromolar concentrations and its inhibitory action is at high micromolar to millimolar concentrations. Excitatory glycine receptors are inhibited by D-serine at 100uM. Functionally, component of N-methyl-D-aspartate (NMDA) receptors (NMDARs) that function as heterotetrameric, ligand-gated cation channels with high calcium permeability and voltage-dependent block by Mg(2+). NMDARs participate in synaptic plasticity for learning and memory formation by contributing to the long-term potentiation (LTP). Channel activation requires binding of the neurotransmitter L-glutamate to the GluN2 subunit, glycine or D-serine binding to the GluN1 subunit, plus membrane depolarization to eliminate channel inhibition by Mg(2+). NMDARs mediate simultaneously the potasium efflux and the influx of calcium and sodium. Each GluN2 or GluN3 subunit confers differential attributes to channel properties, including activation, deactivation and desensitization kinetics, pH sensitivity, Ca2(+) permeability, and binding to allosteric modulators. Forms excitatory glycinergic receptor complexes with GluN3 alone which are activated by glycine binding to the GluN1 and GluN3 subunits. This is Glutamate receptor ionotropic, NMDA 1 from Rattus norvegicus (Rat).